The chain runs to 430 residues: Isochorismate synthase MenF (430 aa).

Residue Lys-187 is the Proton acceptor of the active site. Residue Glu-237 is the Proton donor of the active site. Mg(2+)-binding residues include Glu-281 and Glu-414.

It belongs to the isochorismate synthase family. It depends on Mg(2+) as a cofactor.

The enzyme catalyses chorismate = isochorismate. It participates in quinol/quinone metabolism; 1,4-dihydroxy-2-naphthoate biosynthesis; 1,4-dihydroxy-2-naphthoate from chorismate: step 1/7. The protein operates within quinol/quinone metabolism; menaquinone biosynthesis. Its function is as follows. Catalyzes the conversion of chorismate to isochorismate. The sequence is that of Isochorismate synthase MenF from Haemophilus influenzae (strain ATCC 51907 / DSM 11121 / KW20 / Rd).